Here is a 415-residue protein sequence, read N- to C-terminus: MKFRTLLIIFSLVFLLEIVSASEPQCGRDAGGALCHGNLCCSHWGFCGTTAIYCDVDQGCQSQCWSSPPPPSPPPPPPSPPPPSPPPPSPPPPSPPPPSPPPPSPPPPSPPPPSPPPPGGPERPDHRCGRALGNPPCNPGRCCSIHNWCGSTAAYCRGSSCQYQCWNSLLSALISNGNNAISKIISKSVFDEMFKHMKDCPSKGFYSYDAFIIATTSFPHFGTTGDITTRKRELAAFFAQTSLATTGQRFDSQDLYVWGYCHINETTNGNDNDYCTSAHWPCPSGKKYNSRGAVQLTHNYNYGLAGEALGLDLINNPDLVATDPVISFKTAIWFWMAQHDNKLSCHDILINANSGYVIGNIIKNSGYQNGLITNTISTMRGIGYYKRYCDMLGVSYGDNLDSWYDQTHFSEVARM.

An N-terminal signal peptide occupies residues 1–21 (MKFRTLLIIFSLVFLLEIVSA). In terms of domain architecture, Chitin-binding type-1 1 spans 23-66 (EPQCGRDAGGALCHGNLCCSHWGFCGTTAIYCDVDQGCQSQCWS). 4 disulfides stabilise this stretch: cysteine 26/cysteine 41, cysteine 35/cysteine 47, cysteine 40/cysteine 54, and cysteine 60/cysteine 64. Positions 65-127 (WSSPPPPSPP…PGGPERPDHR (63 aa)) are disordered. A compositionally biased stretch (pro residues) spans 67–121 (SPPPPSPPPPPPSPPPPSPPPPSPPPPSPPPPSPPPPSPPPPSPPPPSPPPPGGP). Residues 125–167 (DHRCGRALGNPPCNPGRCCSIHNWCGSTAAYCRGSSCQYQCWN) enclose the Chitin-binding type-1 2 domain. Cystine bridges form between cysteine 128–cysteine 143, cysteine 137–cysteine 149, cysteine 142–cysteine 156, and cysteine 161–cysteine 165. A glycan (N-linked (GlcNAc...) asparagine) is linked at asparagine 264.

Post-translationally, glycosylated.

The protein resides in the secreted. Chitin-binding protein which slows larval growth when consumed by the lepidopteran species S.ricini and M.brassica, but not when consumed by the mulberry specialist B.mori. Lacks chitinase activity. The protein is Mulatexin of Morus alba (White mulberry).